A 413-amino-acid chain; its full sequence is NADPH dehydrogenase afvA (413 aa).

FMN is bound at residue 53 to 56 (APLC). Position 58 (Tyr58) interacts with substrate. Ala88 and Gln130 together coordinate FMN. 211 to 214 (HAAH) contributes to the substrate binding site. Residues Arg264 and 370-371 (GR) contribute to the FMN site.

The protein belongs to the NADH:flavin oxidoreductase/NADH oxidase family. NamA subfamily. It depends on FMN as a cofactor.

It catalyses the reaction A + NADPH + H(+) = AH2 + NADP(+). It functions in the pathway secondary metabolite biosynthesis. NADPH dehydrogenase; part of the gene cluster that mediates the biosynthesis of aflavarin, a bicoumarin that exhibits anti-insectan activity against the fungivorous beetle C.hemipterus. The protein is NADPH dehydrogenase afvA of Aspergillus flavus (strain ATCC 200026 / FGSC A1120 / IAM 13836 / NRRL 3357 / JCM 12722 / SRRC 167).